We begin with the raw amino-acid sequence, 128 residues long: Glyoxylase-like domain-containing protein (128 aa).

The region spanning 6-125 is the VOC domain; it reads QISGIEIPAT…EGNTHAICTR (120 aa).

It functions in the pathway mycotoxin biosynthesis. Functionally, glyoxylase-like domain-containing protein; part of the gene cluster that mediates the biosynthesis of the selective antifungal agent ascochitine, an o-quinone methide that plays a possible protective role against other microbial competitors in nature and is considered to be important for pathogenicity of legume-associated Didymella species. The pathway probably begins with the synthesis of a keto-aldehyde intermediate by the ascochitine non-reducing polyketide synthase pksAC from successive condensations of 4 malonyl-CoA units, presumably with a simple acetyl-CoA starter unit. Release of the keto-aldehyde intermediate is consistent with the presence of the C-terminal reductive release domain. The HR-PKS (orf7) probably makes a diketide starter unit which is passed to the non-reducing polyketide synthase pksAC for further extension, producing ascochital and ascochitine. The aldehyde dehydrogenase (orf1), the 2-oxoglutarate-dependent dioxygenase (orf3) and the dehydrogenase (orf9) are probably involved in subsequent oxidations of methyl groups to the carboxylic acid of the heterocyclic ring. The ascochitine gene cluster also includes a gene encoding a short peptide with a cupin domain (orf2) that is often found in secondary metabolite gene clusters and which function has still to be determined. This chain is Glyoxylase-like domain-containing protein, found in Didymella fabae (Leaf and pod spot disease fungus).